Consider the following 293-residue polypeptide: Ribosomal protein L11 methyltransferase (293 aa).

4 residues coordinate S-adenosyl-L-methionine: Thr-145, Gly-166, Asp-188, and Asn-230.

This sequence belongs to the methyltransferase superfamily. PrmA family.

The protein resides in the cytoplasm. The catalysed reaction is L-lysyl-[protein] + 3 S-adenosyl-L-methionine = N(6),N(6),N(6)-trimethyl-L-lysyl-[protein] + 3 S-adenosyl-L-homocysteine + 3 H(+). In terms of biological role, methylates ribosomal protein L11. This is Ribosomal protein L11 methyltransferase from Shewanella woodyi (strain ATCC 51908 / MS32).